Consider the following 396-residue polypeptide: Acyl-[acyl-carrier-protein] desaturase, chloroplastic (396 aa).

Residues 1-33 (MALKFHPLTSQSPKLPSFRMPQLASLRSPKFVM) constitute a chloroplast transit peptide. Fe cation-binding residues include E138, E176, H179, E229, E262, and H265.

This sequence belongs to the fatty acid desaturase type 2 family. In terms of assembly, homodimer. It depends on Fe(2+) as a cofactor.

Its subcellular location is the plastid. The protein localises to the chloroplast. Its pathway is lipid metabolism; fatty acid metabolism. In terms of biological role, introduces a cis double bond in the acyl chain of an acyl-[acyl-carrier protein]. The polypeptide is Acyl-[acyl-carrier-protein] desaturase, chloroplastic (Cucumis sativus (Cucumber)).